A 720-amino-acid chain; its full sequence is Denticleless protein homolog (720 aa).

3 WD repeats span residues 43–85, 92–131, and 134–174; these read GMPV…TTKL, AHSN…LLGI, and GHQC…KDGF. The DDB1-binding motif motif lies at 164-167; it reads WDTR. Residues 193-200 carry the Nuclear localization signal motif; sequence PSKLRKKR. WD repeat units follow at residues 211 to 250, 266 to 305, 310 to 351, and 355 to 395; these read DFQQ…AAYR, TRKL…TFPV, GHQN…LPPR, and GHSQ…EEEK. Positions 240-243 match the DDB1-binding motif motif; the sequence is WDLR. Disordered stretches follow at residues 411-437, 476-495, 528-552, and 607-698; these read KPEE…VGSP, PAKL…PSSK, QSLL…KRRL, and NEHE…TSPK. Residues 528-542 are compositionally biased toward polar residues; the sequence is QSLLETSSTPKAQHS. Composition is skewed to basic and acidic residues over residues 543-552 and 642-660; these read QAEKRAKRRL and CERD…ERKN.

It belongs to the WD repeat cdt2 family. As to quaternary structure, component of the DCX(DTL) E3 ubiquitin ligase complex, at least composed of CUL4 (CUL4A or CUL4B), DDB1, DTL/CDT2 and RBX1.

The protein resides in the nucleus. Its subcellular location is the cytoplasm. It localises to the cytoskeleton. It is found in the microtubule organizing center. The protein localises to the centrosome. The protein resides in the chromosome. Its pathway is protein modification; protein ubiquitination. In terms of biological role, substrate-specific adapter of a DCX (DDB1-CUL4-X-box) E3 ubiquitin-protein ligase complex required for cell cycle control, DNA damage response and translesion DNA synthesis. The DCX(DTL) complex, also named CRL4(CDT2) complex, mediates the polyubiquitination and subsequent degradation of CDT1, CDKN1A/p21(CIP1), KMT5A and SDE2. CDT1 degradation in response to DNA damage is necessary to ensure proper cell cycle regulation of DNA replication. CDKN1A/p21(CIP1) degradation during S phase or following UV irradiation is essential to control replication licensing. KMT5A degradation is also important for a proper regulation of mechanisms such as TGF-beta signaling, cell cycle progression, DNA repair and cell migration. Most substrates require their interaction with PCNA for their polyubiquitination: substrates interact with PCNA via their PIP-box, and those containing the 'K+4' motif in the PIP box, recruit the DCX(DTL) complex, leading to their degradation. In undamaged proliferating cells, the DCX(DTL) complex also promotes the 'Lys-164' monoubiquitination of PCNA, thereby being involved in PCNA-dependent translesion DNA synthesis. May play a role in the regulation of the circadian clock. This chain is Denticleless protein homolog (DTL), found in Gallus gallus (Chicken).